We begin with the raw amino-acid sequence, 169 residues long: Sorting nexin-24 (169 aa).

Met1 is modified (N-acetylmethionine). The PX domain maps to 1–125 (MEVYIPSFRY…SFDETESEES (125 aa)). A 1,2-diacyl-sn-glycero-3-phospho-(1D-myo-inositol-3-phosphate) is bound by residues Arg38, Ser40, Lys61, and Arg74. 2 positions are modified to phosphoserine: Ser113 and Ser116.

The protein belongs to the sorting nexin family.

The protein resides in the cytoplasmic vesicle membrane. Its function is as follows. May be involved in several stages of intracellular trafficking. The chain is Sorting nexin-24 (SNX24) from Bos taurus (Bovine).